The chain runs to 300 residues: Homoserine kinase (300 aa).

87–97 (PISRGLGSSSA) contributes to the ATP binding site.

It belongs to the GHMP kinase family. Homoserine kinase subfamily.

The protein localises to the cytoplasm. The catalysed reaction is L-homoserine + ATP = O-phospho-L-homoserine + ADP + H(+). Its pathway is amino-acid biosynthesis; L-threonine biosynthesis; L-threonine from L-aspartate: step 4/5. Functionally, catalyzes the ATP-dependent phosphorylation of L-homoserine to L-homoserine phosphate. This is Homoserine kinase from Clostridium kluyveri (strain ATCC 8527 / DSM 555 / NBRC 12016 / NCIMB 10680 / K1).